The chain runs to 212 residues: uncharacterized protein (212 aa).

A disordered region spans residues 42–101 (GITGPKATKSPSRRTTRSPSPSRRTTRSSPSRRTTRSSPSRRTTRSPSPSGRRKQGGPAV). Residues 58-91 (RSPSPSRRTTRSSPSRRTTRSSPSRRTTRSPSPS) show a composition bias toward low complexity.

Belongs to the IIV-6 378R family.

This is an uncharacterized protein from Invertebrate iridescent virus 3 (IIV-3).